Reading from the N-terminus, the 382-residue chain is tRNA (guanine(26)-N(2))-dimethyltransferase (382 aa).

One can recognise a Trm1 methyltransferase domain in the interval 4–373 (VEIIEGKARI…KNLDEIKECI (370 aa)). The S-adenosyl-L-methionine site is built by Arg44, Arg69, and Asp87. The Zn(2+) site is built by Cys246, Cys249, Cys263, and Cys266.

Belongs to the class I-like SAM-binding methyltransferase superfamily. Trm1 family.

It carries out the reaction guanosine(26) in tRNA + 2 S-adenosyl-L-methionine = N(2)-dimethylguanosine(26) in tRNA + 2 S-adenosyl-L-homocysteine + 2 H(+). Its function is as follows. Dimethylates a single guanine residue at position 26 of a number of tRNAs using S-adenosyl-L-methionine as donor of the methyl groups. This is tRNA (guanine(26)-N(2))-dimethyltransferase from Sulfolobus acidocaldarius (strain ATCC 33909 / DSM 639 / JCM 8929 / NBRC 15157 / NCIMB 11770).